We begin with the raw amino-acid sequence, 445 residues long: GTPase Obg (445 aa).

The Obg domain maps to 7–164; that stretch reads PEFVDCVTVE…RKLRLEVKSI (158 aa). The OBG-type G domain occupies 165 to 342; the sequence is ADVALVGFPS…FTLRLGEICQ (178 aa). Residues 171–178, 196–200, 217–220, 291–294, and 323–325 contribute to the GTP site; these read GFPSVGKS, FTTLH, DVPG, NKID, and SAV. Residues Ser178 and Thr198 each contribute to the Mg(2+) site. The region spanning 357–434 is the OCT domain; the sequence is IPAKNTPEFS…IGGVIFTWDP (78 aa).

It belongs to the TRAFAC class OBG-HflX-like GTPase superfamily. OBG GTPase family. As to quaternary structure, monomer. Requires Mg(2+) as cofactor.

The protein resides in the cytoplasm. An essential GTPase which binds GTP, GDP and possibly (p)ppGpp with moderate affinity, with high nucleotide exchange rates and a fairly low GTP hydrolysis rate. Plays a role in control of the cell cycle, stress response, ribosome biogenesis and in those bacteria that undergo differentiation, in morphogenesis control. The chain is GTPase Obg from Tropheryma whipplei (strain Twist) (Whipple's bacillus).